We begin with the raw amino-acid sequence, 126 residues long: C-X-C motif chemokine 9 (126 aa).

The N-terminal stretch at 1 to 21 (MKSAVLFLLGIIFLEQCGVRG) is a signal peptide. Disulfide bonds link C30–C57 and C32–C73. The N-linked (GlcNAc...) asparagine glycan is linked to N58. A disordered region spans residues 91–126 (KISQKKKQKRGKKHQKNMKNRKPKTPQSRRRSRKTT). Over residues 93 to 126 (SQKKKQKRGKKHQKNMKNRKPKTPQSRRRSRKTT) the composition is skewed to basic residues.

Belongs to the intercrine alpha (chemokine CxC) family.

The protein localises to the secreted. Its function is as follows. May be a cytokine that affects the growth, movement, or activation state of cells that participate in immune and inflammatory response. This is C-X-C motif chemokine 9 (Cxcl9) from Mus musculus (Mouse).